The following is a 782-amino-acid chain: Translation initiation factor IF-2 (782 aa).

Over residues 1-14 the composition is skewed to basic and acidic residues; that stretch reads MSKNIDDKNEDGKK. Disordered regions lie at residues 1-106 and 132-174; these read MSKN…KKTY and SIVS…AETE. Residues 15–25 show a composition bias toward basic residues; it reads IKIIKLRKKVV. Over residues 31–43 the composition is skewed to polar residues; sequence NDLSGKNNPSGST. The segment covering 44–61 has biased composition (basic and acidic residues); sequence DLHKHNNKVEYSHSRDGR. 2 stretches are compositionally biased toward polar residues: residues 86–106 and 133–142; these read GYSQ…KKTY and IVSSASSTDS. The segment covering 143 to 159 has biased composition (basic and acidic residues); the sequence is ENSKELNRKLGEKKKQQ. Residues 280 to 453 form the tr-type G domain; sequence EKPPVITIMG…DMMLLKANPS (174 aa). The segment at 289–296 is G1; it reads GHVDHGKT. GTP is bound at residue 289–296; sequence GHVDHGKT. The G2 stretch occupies residues 314–318; sequence GITQH. The tract at residues 335–338 is G3; sequence DTPG. Residues 335–339 and 389–392 each bind GTP; these read DTPGH and NKID. Positions 389–392 are G4; the sequence is NKID. Positions 425–427 are G5; that stretch reads SAL.

This sequence belongs to the TRAFAC class translation factor GTPase superfamily. Classic translation factor GTPase family. IF-2 subfamily.

It localises to the cytoplasm. In terms of biological role, one of the essential components for the initiation of protein synthesis. Protects formylmethionyl-tRNA from spontaneous hydrolysis and promotes its binding to the 30S ribosomal subunits. Also involved in the hydrolysis of GTP during the formation of the 70S ribosomal complex. This is Translation initiation factor IF-2 from Borreliella afzelii (strain PKo) (Borrelia afzelii).